The primary structure comprises 74 residues: Bacteriocin hiracin-JM79 (74 aa).

The first 30 residues, 1-30, serve as a signal peptide directing secretion; that stretch reads MKKKVLKHCVILGILGTCLAGIGTGIKVDA.

Its subcellular location is the secreted. Functionally, bacteriocin with antibacterial activity against the Gram-positive Listeria, Enterococcus, Propionibacterium, Staphylococcus and some strains of Clostridium, Lactobacillus and Pediococcus. Lacks antibacterial activity against Gram-negative bacteria. The sequence is that of Bacteriocin hiracin-JM79 from Enterococcus hirae.